The sequence spans 136 residues: NADPH-dependent 7-cyano-7-deazaguanine reductase (136 aa).

The active-site Thioimide intermediate is the Cys-53. The active-site Proton donor is the Asp-60. Substrate contacts are provided by residues 75-77 and 94-95; these read VEL and HE.

Belongs to the GTP cyclohydrolase I family. QueF type 1 subfamily.

The protein localises to the cytoplasm. It carries out the reaction 7-aminomethyl-7-carbaguanine + 2 NADP(+) = 7-cyano-7-deazaguanine + 2 NADPH + 3 H(+). It functions in the pathway tRNA modification; tRNA-queuosine biosynthesis. In terms of biological role, catalyzes the NADPH-dependent reduction of 7-cyano-7-deazaguanine (preQ0) to 7-aminomethyl-7-deazaguanine (preQ1). The chain is NADPH-dependent 7-cyano-7-deazaguanine reductase from Nostoc sp. (strain PCC 7120 / SAG 25.82 / UTEX 2576).